A 173-amino-acid chain; its full sequence is Crossover junction endodeoxyribonuclease RuvC (173 aa).

Residues Asp8, Glu67, and Asp139 contribute to the active site. Positions 8, 67, and 139 each coordinate Mg(2+).

Belongs to the RuvC family. In terms of assembly, homodimer which binds Holliday junction (HJ) DNA. The HJ becomes 2-fold symmetrical on binding to RuvC with unstacked arms; it has a different conformation from HJ DNA in complex with RuvA. In the full resolvosome a probable DNA-RuvA(4)-RuvB(12)-RuvC(2) complex forms which resolves the HJ. Requires Mg(2+) as cofactor.

The protein localises to the cytoplasm. The catalysed reaction is Endonucleolytic cleavage at a junction such as a reciprocal single-stranded crossover between two homologous DNA duplexes (Holliday junction).. In terms of biological role, the RuvA-RuvB-RuvC complex processes Holliday junction (HJ) DNA during genetic recombination and DNA repair. Endonuclease that resolves HJ intermediates. Cleaves cruciform DNA by making single-stranded nicks across the HJ at symmetrical positions within the homologous arms, yielding a 5'-phosphate and a 3'-hydroxyl group; requires a central core of homology in the junction. The consensus cleavage sequence is 5'-(A/T)TT(C/G)-3'. Cleavage occurs on the 3'-side of the TT dinucleotide at the point of strand exchange. HJ branch migration catalyzed by RuvA-RuvB allows RuvC to scan DNA until it finds its consensus sequence, where it cleaves and resolves the cruciform DNA. This chain is Crossover junction endodeoxyribonuclease RuvC, found in Photobacterium profundum (strain SS9).